We begin with the raw amino-acid sequence, 545 residues long: Triacylglycerol lipase ptl1 (545 aa).

Positions 182–358 constitute a PNPLA domain; that stretch reads LYFNGGTAFG…EVCTPKNFIW (177 aa). The GXSXG signature appears at 213-217; it reads GCASG.

Its subcellular location is the lipid droplet. It carries out the reaction a triacylglycerol + H2O = a diacylglycerol + a fatty acid + H(+). In terms of biological role, lipid particle-localized triacylglycerol (TAG) lipase. The lipid droplet/particle is a lipid storage compartment which serves as a depot of energy and building blocks for membrane lipid biosynthesis. Involved in the mobilization of the non-polar storage lipids triacylglycerols (TAGs) from lipid particles by hydrolysis of TAGs, releasing and supplying specific fatty acids to the appropriate metabolic pathways. The protein is Triacylglycerol lipase ptl1 (ptl1) of Schizosaccharomyces pombe (strain 972 / ATCC 24843) (Fission yeast).